The sequence spans 402 residues: MTTKQVTCRYFLHGVCREGNHCQFSHDPSSSKPSTICKFYQRGTCAYGERCRYDHVKLSSRGGGAFDMAGVGGARDGASTRGAAKKTFVHQERENMFRAPAESFGADVMAPAPHTYVDAIRTGLSSSSQDHTPPTMAGVNQDLPRLCPYAAVGHCYYEENCIYLHGDKCEVCGLQVLDPHNPEQRSMHEKMCLLAFEADMEKAFAVQLSQEKVCSICMEVVVQKMNPSDRRFGILSSCCHVFCLACIRKWRCTRNFSNKIIKSCPECRVASEFVIPSVYWEENQEDKVHLIELFKSGVGKKPCKYFDQGRGSCPFGGKCLYLHALPDGSRAEPEQPRKQLGSEGNIRFMNSVRLWDFIEEREQHSAPPLQAFADDISELRELFVQMSGPSPDEGESQSRSAP.

3 C3H1-type zinc fingers span residues 2–29, 31–58, and 141–168; these read TTKQ…HDPS, SKPS…HVKL, and QDLP…HGDK. The interval 169 to 198 is makorin-type Cys-His; that stretch reads CEVCGLQVLDPHNPEQRSMHEKMCLLAFEA. Residues 214–268 form an RING-type zinc finger; it reads CSICMEVVVQKMNPSDRRFGILSSCCHVFCLACIRKWRCTRNFSNKIIKSCPECR. The C3H1-type 4 zinc-finger motif lies at 297 to 326; that stretch reads GVGKKPCKYFDQGRGSCPFGGKCLYLHALP.

The protein localises to the cytoplasm. It is found in the nucleus. The catalysed reaction is S-ubiquitinyl-[E2 ubiquitin-conjugating enzyme]-L-cysteine + [acceptor protein]-L-lysine = [E2 ubiquitin-conjugating enzyme]-L-cysteine + N(6)-ubiquitinyl-[acceptor protein]-L-lysine.. Its pathway is protein modification; protein ubiquitination. E3 ubiquitin ligase catalyzing the covalent attachment of ubiquitin moieties onto substrate proteins. Inhibits neurogenesis and axis formation during embryonic development by modulating the phosphatidylinositol 3-kinase (PI3K) pathway. Acts downstream of PI3K and akt1 to up-regulate gsk3b mRNA expression. This Takifugu rubripes (Japanese pufferfish) protein is E3 ubiquitin-protein ligase makorin-2.